An 88-amino-acid chain; its full sequence is U-scoloptoxin(12)-Sa1a (88 aa).

Residues 1-20 (MKYMIITVVILFTCALKMFC) form the signal peptide.

This sequence belongs to the scoloptoxin-12 family. In terms of processing, contains 3 disulfide bonds. In terms of tissue distribution, expressed by the venom gland.

Its subcellular location is the secreted. This Scolopendra alternans (Florida Keys giant centipede) protein is U-scoloptoxin(12)-Sa1a.